A 316-amino-acid chain; its full sequence is MSHTRAVVLAVACLCLILVQVEGTWNALDPEQMRFIHSRCFEDNLPAGPKRALYASKWIKWELEPNDETTHCFAKCVLEGIQLYDSKSKKFRSKRITIQHEAYKTFTGANDDEVAKYKQAVAALRVGSGSCSDVFNTYLPVHKQFHDVSQLVYLSVSAVAAKIYEADPNVKRKGESFAEYCAKRAWDEKTKGDACKARKYELTGSNELKAAIDCIFRGFRYINENGFNPDEIVRDFKLINKPELEPQVRSVLSKCAGEKAYEYYSCLLQSNVKEDFKHAFDFRELRSVDYSYLVKGNVYDPAKLKEEMAKADAKVC.

The first 23 residues, 1–23, serve as a signal peptide directing secretion; the sequence is MSHTRAVVLAVACLCLILVQVEG. Cystine bridges form between Cys40/Cys76, Cys72/Cys131, Cys181/Cys214, and Cys255/Cys266.

Belongs to the PBP/GOBP family.

Its subcellular location is the secreted. Modulates blood feeding of female mosquitoes on vertebrate species by binding and sequestering different mediators involved in the host response, such as biogenic amines and eicosanoids. Binds serotonin, tryptamine, histamine, leukotriene C4, leukotriene D4 and leukotriene E4. Does not bind octopamine, dopamine, noradrenaline, adrenaline and prostaglandin PGF2alpha. The polypeptide is Long form salivary protein D7L1 (Anopheles atroparvus (European mosquito)).